A 235-amino-acid chain; its full sequence is MICOS complex subunit MIC25 (235 aa).

The N-myristoyl glycine moiety is linked to residue glycine 2. 2 positions are modified to phosphoserine: serine 13 and serine 31. 2 disordered regions span residues 31 to 90 and 106 to 132; these read SENV…VKRY and KREREAATKHSKASLPTGEGSISHEEQ. The stretch at 129–176 forms a coiled coil; the sequence is HEEQKSVRLARELESREAELRRRDTFYKEQLERIERKNAEMYKLSSEQ. In terms of domain architecture, CHCH spans 194-235; it reads EPVCSGLQAQILHCYRDRPHEVLLCSDLVKAYQRCVSAAHKG. 2 consecutive short sequence motifs (cx9C motif) follow at residues 197 to 207 and 218 to 228; these read CSGLQAQILHC and CSDLVKAYQRC. Cystine bridges form between cysteine 197/cysteine 228 and cysteine 207/cysteine 218.

Belongs to the MICOS complex subunit Mic19 family. Metazoan Mic25 subfamily. Component of the mitochondrial contact site and cristae organizing system (MICOS) complex, composed of at least MICOS10/MIC10, CHCHD3/MIC19, CHCHD6/MIC25, APOOL/MIC27, IMMT/MIC60, APOO/MIC23/MIC26 and MICOS13/MIC13. This complex was also known under the names MINOS or MitOS complex. The MICOS complex associates with mitochondrial outer membrane proteins SAMM50, MTX1 and MTX2 (together described as components of the mitochondrial outer membrane sorting assembly machinery (SAM) complex) and DNAJC11, mitochondrial inner membrane protein TMEM11 and with HSPA9. The MICOS and SAM complexes together with DNAJC11 are part of a large protein complex spanning both membranes termed the mitochondrial intermembrane space bridging (MIB) complex. Interacts with DISC1. Interacts with DISC1. Interacts with IMMT/MIC60. In terms of assembly, (Microbial infection) Interacts with human cytomegalovirus protein UL37 isoform vMIA; this interaction rewires mitochondria by engaging the conserved MICOS complex.

It is found in the mitochondrion inner membrane. Its subcellular location is the mitochondrion. Component of the MICOS complex, a large protein complex of the mitochondrial inner membrane that plays crucial roles in the maintenance of crista junctions, inner membrane architecture, and formation of contact sites to the outer membrane. The polypeptide is MICOS complex subunit MIC25 (CHCHD6) (Homo sapiens (Human)).